Reading from the N-terminus, the 164-residue chain is Telomerase-associated protein of 19 kDa (164 aa).

As to quaternary structure, component of the telomerase holoenzyme complex, composed of the catalytic core (the catalytic subunit TERT, the telomerase RNA template component TER and TAP65/p65), which is associated with two heterotrimeric subcomplexes: (i) the replication protein A (RPA)-related subcomplex, composed of TEB1, RPA2/TEB2 and RPA3/TEB3 and (ii) the CST-like subcomplex, composed of TAP75/p75, TAP45/p45 and TAP19/p19. TEB1 and the CST-like subcomplex are tethered to the catalytic core by TAP50/p50.

Its subcellular location is the chromosome. It localises to the telomere. Functionally, component of a CST-like subcomplex of the holoenzyme telomerase ribonucleoprotein complex, which stimulates telomerase complementary-strand synthesis. Telomerase is an essential ribonucleoprotein enzyme that copies new telomeric repeats onto chromosome ends by repetitively synthesizing the short telomere-repeat sequence 5'-TTGGGG-3' using an RNA template component TER. The CST-like subcomplex (also named 7-4-1) binds telomeric single-stranded DNA and coordinates telomere G-strand and C-strand synthesis. This chain is Telomerase-associated protein of 19 kDa, found in Tetrahymena thermophila (strain SB210).